Reading from the N-terminus, the 236-residue chain is 15,16-dihydrobiliverdin:ferredoxin oxidoreductase (236 aa).

Belongs to the HY2 family.

The catalysed reaction is 15,16-dihydrobiliverdin + oxidized 2[4Fe-4S]-[ferredoxin] = biliverdin IXalpha + reduced 2[4Fe-4S]-[ferredoxin] + 2 H(+). In terms of biological role, catalyzes the two-electron reduction of biliverdin IX-alpha at the C15 methine bridge. The protein is 15,16-dihydrobiliverdin:ferredoxin oxidoreductase of Prochlorococcus marinus (strain MIT 9515).